A 675-amino-acid polypeptide reads, in one-letter code: Protein PALS1 (675 aa).

Disordered stretches follow at residues 1-34 (MTTS…KHRE) and 51-78 (RRSA…KKQE). The interval 1–345 (MTTSHMNGHV…QQIKPPPAKE (345 aa)) is required for the correct localization of PALS1 and PATJ at cell-cell contacts and the normal formation of tight junctions and adherens junctions. 2 stretches are compositionally biased toward basic and acidic residues: residues 10–34 (VTEE…KHRE) and 54–78 (AQLE…KKQE). Ser-14 and Ser-25 each carry phosphoserine. The interval 21 to 140 (VDLASPEEHQ…LKHIQHTLID (120 aa)) is interaction with PARD6B. Phosphoserine occurs at positions 83 and 84. L27 domains follow at residues 120 to 177 (KILE…NKAS) and 179 to 235 (PFPL…MQLE). An interaction with LIN7C region spans residues 181-243 (PLISNAQDLA…LEPITDERVY (63 aa)). In terms of domain architecture, PDZ spans 256–336 (IVRIEKARDI…TLTFVLIPSQ (81 aa)). The 73-residue stretch at 345–417 (ETVIHVKAHF…PGKSFQQQRE (73 aa)) folds into the SH3 domain. One can recognise a Guanylate kinase-like domain in the interval 479 to 660 (KRPIILIGPQ…AYQELLRLIN (182 aa)). Residue 486 to 493 (GPQNCGQN) coordinates ATP.

Belongs to the MAGUK family. As to quaternary structure, heterodimer with MPP1. Forms a heterotrimeric complex composed of PALS1, LIN7B and PATJ; the N-terminal L27 domain of PALS1 interacts with the L27 domain of PATJ and the C-terminal L27 domain of PALS1 interacts with the L27 domain of LIN7B. Component of a complex composed of PALS1, CRB1 and MPP4. Component of a complex whose core is composed of ARHGAP17, AMOT, PALS1, PATJ and PARD3/PAR3. Component of a complex composed of PALS1, CRB1 and EPB41L5. Within the complex, interacts (via HOOK domain) with EPB41L5 (via FERM domain), and interacts with CRB1 (via intracellular domain). Component of a complex composed of PALS1, MPP3 and CRB1; PALS1 acts as a bridging protein between MPP3 (via guanylate kinase-like domain) and CRB1. Component of a complex composed of CRB3, PALS1 and PATJ. As part of the Crumbs complex; interacts with WWP1, the interaction is enhanced by AMOTL2 and facilitates WWP1 localization to the plasma membrane. The Crumbs complex promotes monoubiquitination of AMOTL2 by WWP1, which activates the Hippo signaling pathway. Interacts (via PDZ domain) with PATJ (via N-terminus). Interacts with EZR. Interacts (via PDZ domain) with CRB1 (via C-terminal ERLI motif). While the PDZ domain is sufficient for interaction with CRB1, the adjacent SH3 and guanylate kinase-like domains are likely to contribute to a high affinity interaction. Interacts with WWTR1/TAZ (via WW domain). Interacts with MPP7. Interacts (via PDZ domain) with CRB3 (via C-terminus). Interacts with LIN7C. Interacts with MPDZ. Interacts with PARD6B. Interacts with SC6A1. Interacts with CDH5; the interaction promotes PALS1 localization to cell junctions and is required for CDH5-mediated vascular lumen formation and endothelial cell. Interacts with NPHP1 (via coiled coil and SH3 domains). Interacts with NPHP4. Interacts with CRB2.

Its subcellular location is the golgi apparatus. It localises to the cell membrane. The protein localises to the endomembrane system. It is found in the cell junction. The protein resides in the tight junction. Its subcellular location is the adherens junction. It localises to the cell projection. The protein localises to the axon. It is found in the perikaryon. The protein resides in the apical cell membrane. Functionally, plays a role in tight junction biogenesis and in the establishment of cell polarity in epithelial cells. Also involved in adherens junction biogenesis by ensuring correct localization of the exocyst complex protein EXOC4/SEC8 which allows trafficking of adherens junction structural component CDH1 to the cell surface. Plays a role through its interaction with CDH5 in vascular lumen formation and endothelial membrane polarity. Required during embryonic and postnatal retinal development. Required for the maintenance of cerebellar progenitor cells in an undifferentiated proliferative state, preventing premature differentiation, and is required for cerebellar histogenesis, fissure formation, cerebellar layer organization and cortical development. Plays a role in neuronal progenitor cell survival, potentially via promotion of mTOR signaling. Plays a role in the radial and longitudinal extension of the myelin sheath in Schwann cells. May modulate SC6A1/GAT1-mediated GABA uptake by stabilizing the transporter. May play a role in the T-cell receptor-mediated activation of NF-kappa-B. Required for localization of EZR to the apical membrane of parietal cells and may play a role in the dynamic remodeling of the apical cytoskeleton. Required for the normal polarized localization of the vesicular marker STX4. Required for the correct trafficking of the myelin proteins PMP22 and MAG. Involved in promoting phosphorylation and cytoplasmic retention of transcriptional coactivators YAP1 and WWTR1/TAZ which leads to suppression of TGFB1-dependent transcription of target genes such as CCN2/CTGF, SERPINE1/PAI1, SNAI1/SNAIL1 and SMAD7. In Pongo abelii (Sumatran orangutan), this protein is Protein PALS1.